Here is a 499-residue protein sequence, read N- to C-terminus: Neuronal acetylcholine receptor subunit alpha-7 (499 aa).

The first 19 residues, 1 to 19 (MRGSLCLALAASILHVSLQ), serve as a signal peptide directing secretion. Over 20–230 (GEFQRKLYKD…VSIRRRTLYY (211 aa)) the chain is Extracellular. Ca(2+) contacts are provided by Arg39 and Val41. 3 N-linked (GlcNAc...) asparagine glycosylation sites follow: Asn43, Asn87, and Asn130. Cys147 and Cys161 form a disulfide bridge. 2 residues coordinate Ca(2+): Ser169 and Tyr207. Cys209 and Cys210 form a disulfide bridge. 3 consecutive transmembrane segments (helical) span residues 231 to 251 (GLNLLIPCVLISALALLVFLL), 259 to 279 (ISLGITVLLSLTVFMLLVAEI), and 292 to 312 (QYFASTMIIVGLSVVVTVIVL). The essential for TMEM35A/NACHO-mediated proper subunit assembly and trafficking to cell membrane stretch occupies residues 257–264 (EKISLGIT). The Cytoplasmic segment spans residues 313–466 (QYHHHDPDGG…WKFAACVVDR (154 aa)). A helical transmembrane segment spans residues 467-487 (LCLMAFSVFTILCTIGILMSA).

It belongs to the ligand-gated ion channel (TC 1.A.9) family. Acetylcholine receptor (TC 1.A.9.1) subfamily. Alpha-7/CHRNA7 sub-subfamily. As to quaternary structure, homopentamer. Homooligomer of the short form gives rise to unfunctional channels, as does coexpression of both long and short forms of the receptor. Can also form heteropentamers with CHRNB2, mainly found in basal forebrain cholinergic neurons. Interacts with RIC3; which is required for proper folding and assembly. Interacts with LYPD6. Interacts with CANX. Post-translationally, glycosylations at Asn-43, Asn-87 and Asn-130 are essential for TMEM35A/NACHO-mediated proper subunit assembly and trafficking to the cell membrane. As to expression, at least in chromaffin cells.

The protein localises to the postsynaptic cell membrane. Its subcellular location is the cell membrane. It catalyses the reaction Ca(2+)(in) = Ca(2+)(out). It carries out the reaction K(+)(in) = K(+)(out). The catalysed reaction is Na(+)(in) = Na(+)(out). The enzyme catalyses choline(out) = choline(in). It catalyses the reaction NH4(+)(in) = NH4(+)(out). It carries out the reaction L-arginine(in) = L-arginine(out). The catalysed reaction is guanidine(out) = guanidine(in). Activated by a myriad of ligands such as acetylcholine, cytisine, nicotine, choline and epibatidine. Oligomeric amyloid-beta protein 42 activates specifially CHRNA7:CHRNB2 nAchRs. Activity is modulated by positive allosteric modulators (PAMs), such as flavonoids, with a wide range of chemical diversity, pharmacological sensitivity and efficacy. AChR activity is inhibited by the antagonists alpha-conotoxons RgIA, ImI and ImII, small disulfide-constrained peptides from cone snails. Alpha-conotoxin PnIC selectively inhibits CHRNA7:CHRNB2 over CHRNA7 homopentamer. In terms of biological role, component of neuronal acetylcholine receptors (nAChRs) that function as pentameric, ligand-gated cation channels with high calcium permeability among other activities. nAChRs are excitatory neurotrasnmitter receptors formed by a collection of nAChR subunits known to mediate synaptic transmission in the nervous system and the neuromuscular junction. Each nAchR subunit confers differential attributes to channel properties, including activation, deactivation and desensitization kinetics, pH sensitivity, cation permeability, and binding to allosteric modulators. CHRNA7 forms homopentameric neuronal acetylcholine receptors abundantly expressed in the central nervous system, characterized by fast desensitization and high calcium permeability. Also forms heteropentamers with CHRNB2, mainly expressed in basal forebrain cholinergic neurons. Involved in the modulation of calcium-dependent signaling pathways and influences the release of neurotransmitters, including dopamine, glutamate and GABA. Also expressed in non-neuronal cells such as immune cells like lymphocytes, monocytes and macrophages. In T cells, activation induces metabotropic signaling that results in an increase of intracellular Ca2+ concentrations, independent of ionotropic receptor functions. In macrophages, required for acetylcholine-mediated inhibition of TNF and other inflammatory cytokine release. Once activated by acetylcholine, nicotine or other agonists, selectively inhibits production of pro-inflammatory cytokines while leaving anti-inflammatory cytokines undisturbed. Stimulates the cholinergic anti-inflammatory pathway, controlling inflammation by inhibiting NFKB nuclear translocation and activating the JAK2-STAT3 pathway, independently of ion channel activity. Also expressed in the urothelium where it modulates reflex bladder activity by increasing intracellular calcium through internal stores and decreasing basal ATP release. This chain is Neuronal acetylcholine receptor subunit alpha-7 (CHRNA7), found in Bos taurus (Bovine).